The sequence spans 40 residues: Photosystem II reaction center protein J (40 aa).

A helical transmembrane segment spans residues 8 to 28 (IPLWLVGTVTGTLVIGLMGIF).

Belongs to the PsbJ family. As to quaternary structure, PSII is composed of 1 copy each of membrane proteins PsbA, PsbB, PsbC, PsbD, PsbE, PsbF, PsbH, PsbI, PsbJ, PsbK, PsbL, PsbM, PsbT, PsbX, PsbY, PsbZ, Psb30/Ycf12, at least 3 peripheral proteins of the oxygen-evolving complex and a large number of cofactors. It forms dimeric complexes.

Its subcellular location is the plastid. It is found in the chloroplast thylakoid membrane. In terms of biological role, one of the components of the core complex of photosystem II (PSII). PSII is a light-driven water:plastoquinone oxidoreductase that uses light energy to abstract electrons from H(2)O, generating O(2) and a proton gradient subsequently used for ATP formation. It consists of a core antenna complex that captures photons, and an electron transfer chain that converts photonic excitation into a charge separation. The polypeptide is Photosystem II reaction center protein J (Psilotum nudum (Whisk fern)).